A 211-amino-acid polypeptide reads, in one-letter code: Large ribosomal subunit protein uL4 (211 aa).

Positions 41 to 53 are enriched in polar residues; it reads QAHSRQGTASTLT. Residues 41-78 are disordered; it reads QAHSRQGTASTLTRAEVRGGGRKPYKQKGTGRARQGTI. The span at 60 to 71 shows a compositional bias: basic residues; sequence GGRKPYKQKGTG.

Belongs to the universal ribosomal protein uL4 family. As to quaternary structure, part of the 50S ribosomal subunit.

Its function is as follows. One of the primary rRNA binding proteins, this protein initially binds near the 5'-end of the 23S rRNA. It is important during the early stages of 50S assembly. It makes multiple contacts with different domains of the 23S rRNA in the assembled 50S subunit and ribosome. Forms part of the polypeptide exit tunnel. The sequence is that of Large ribosomal subunit protein uL4 from Prochlorococcus marinus (strain MIT 9313).